A 460-amino-acid chain; its full sequence is Bifunctional protein GlmU (460 aa).

Residues 1 to 235 (MALSAAIVLA…PLTVEGVNDR (235 aa)) are pyrophosphorylase. UDP-N-acetyl-alpha-D-glucosamine-binding positions include 9–12 (LAAG), Lys-23, Gln-76, and 81–82 (GT). Residue Asp-109 coordinates Mg(2+). Residues Gly-146, Glu-161, Asn-176, and Asn-233 each contribute to the UDP-N-acetyl-alpha-D-glucosamine site. Position 233 (Asn-233) interacts with Mg(2+). The segment at 236–256 (VQLAALSKTYNRRVCERWMRD) is linker. The N-acetyltransferase stretch occupies residues 257–460 (GVTILDPETT…VEGWKPAWER (204 aa)). Residues Arg-338 and Lys-356 each contribute to the UDP-N-acetyl-alpha-D-glucosamine site. His-368 functions as the Proton acceptor in the catalytic mechanism. Residues Tyr-371 and Asn-382 each contribute to the UDP-N-acetyl-alpha-D-glucosamine site. Residues 391 to 392 (NY) and Ala-428 each bind acetyl-CoA.

The protein in the N-terminal section; belongs to the N-acetylglucosamine-1-phosphate uridyltransferase family. It in the C-terminal section; belongs to the transferase hexapeptide repeat family. In terms of assembly, homotrimer. It depends on Mg(2+) as a cofactor.

Its subcellular location is the cytoplasm. The catalysed reaction is alpha-D-glucosamine 1-phosphate + acetyl-CoA = N-acetyl-alpha-D-glucosamine 1-phosphate + CoA + H(+). It carries out the reaction N-acetyl-alpha-D-glucosamine 1-phosphate + UTP + H(+) = UDP-N-acetyl-alpha-D-glucosamine + diphosphate. Its pathway is nucleotide-sugar biosynthesis; UDP-N-acetyl-alpha-D-glucosamine biosynthesis; N-acetyl-alpha-D-glucosamine 1-phosphate from alpha-D-glucosamine 6-phosphate (route II): step 2/2. The protein operates within nucleotide-sugar biosynthesis; UDP-N-acetyl-alpha-D-glucosamine biosynthesis; UDP-N-acetyl-alpha-D-glucosamine from N-acetyl-alpha-D-glucosamine 1-phosphate: step 1/1. It functions in the pathway bacterial outer membrane biogenesis; LPS lipid A biosynthesis. Functionally, catalyzes the last two sequential reactions in the de novo biosynthetic pathway for UDP-N-acetylglucosamine (UDP-GlcNAc). The C-terminal domain catalyzes the transfer of acetyl group from acetyl coenzyme A to glucosamine-1-phosphate (GlcN-1-P) to produce N-acetylglucosamine-1-phosphate (GlcNAc-1-P), which is converted into UDP-GlcNAc by the transfer of uridine 5-monophosphate (from uridine 5-triphosphate), a reaction catalyzed by the N-terminal domain. In Bifidobacterium longum (strain DJO10A), this protein is Bifunctional protein GlmU.